An 845-amino-acid chain; its full sequence is Protein P (845 aa).

Residues 1-179 (MPLSYQHFRK…FCGSPYSWEQ (179 aa)) form a terminal protein domain (TP) region. Residues 180–348 (ELQHGRLVIK…YCLSHLVNLR (169 aa)) are spacer. The interval 226–245 (GLQPHQGPLASSQPGRSGSI) is disordered. The tract at residues 349–692 (EDWGPCDEHG…YMNLYPVARQ (344 aa)) is polymerase/reverse transcriptase domain (RT). In terms of domain architecture, Reverse transcriptase spans 359–602 (EHHIRIPRTP…YSLNFMGYII (244 aa)). Positions 431, 553, and 554 each coordinate Mg(2+).

Belongs to the hepadnaviridae P protein family.

It catalyses the reaction DNA(n) + a 2'-deoxyribonucleoside 5'-triphosphate = DNA(n+1) + diphosphate. The catalysed reaction is Endonucleolytic cleavage to 5'-phosphomonoester.. Its activity is regulated as follows. Activated by host HSP70 and HSP40 in vitro to be able to bind the epsilon loop of the pgRNA. Because deletion of the RNase H region renders the protein partly chaperone-independent, the chaperones may be needed indirectly to relieve occlusion of the RNA-binding site by this domain. Inhibited by several reverse-transcriptase inhibitors: Lamivudine, Adefovir and Entecavir. Functionally, multifunctional enzyme that converts the viral RNA genome into dsDNA in viral cytoplasmic capsids. This enzyme displays a DNA polymerase activity that can copy either DNA or RNA templates, and a ribonuclease H (RNase H) activity that cleaves the RNA strand of RNA-DNA heteroduplexes in a partially processive 3'- to 5'-endonucleasic mode. Neo-synthesized pregenomic RNA (pgRNA) are encapsidated together with the P protein, and reverse-transcribed inside the nucleocapsid. Initiation of reverse-transcription occurs first by binding the epsilon loop on the pgRNA genome, and is initiated by protein priming, thereby the 5'-end of (-)DNA is covalently linked to P protein. Partial (+)DNA is synthesized from the (-)DNA template and generates the relaxed circular DNA (RC-DNA) genome. After budding and infection, the RC-DNA migrates in the nucleus, and is converted into a plasmid-like covalently closed circular DNA (cccDNA). The activity of P protein does not seem to be necessary for cccDNA generation, and is presumably released from (+)DNA by host nuclear DNA repair machinery. The polypeptide is Protein P (Homo sapiens (Human)).